The sequence spans 1103 residues: Mediator of RNA polymerase II transcription subunit 14 (1103 aa).

Disordered regions lie at residues 22–61 (LNGV…GSDE) and 1043–1067 (TTPK…PAIR). Positions 23 to 36 (NGVSSAPAGSSQLG) are enriched in polar residues.

This sequence belongs to the Mediator complex subunit 14 family. In terms of assembly, component of the Mediator complex.

The protein resides in the nucleus. Its function is as follows. Component of the Mediator complex, a coactivator involved in the regulated transcription of nearly all RNA polymerase II-dependent genes. Mediator functions as a bridge to convey information from gene-specific regulatory proteins to the basal RNA polymerase II transcription machinery. Mediator is recruited to promoters by direct interactions with regulatory proteins and serves as a scaffold for the assembly of a functional preinitiation complex with RNA polymerase II and the general transcription factors. The protein is Mediator of RNA polymerase II transcription subunit 14 (rgr1) of Emericella nidulans (strain FGSC A4 / ATCC 38163 / CBS 112.46 / NRRL 194 / M139) (Aspergillus nidulans).